The primary structure comprises 211 residues: Proteasome subunit beta 2 (211 aa).

The propeptide at 1–17 is removed in mature form; by autocatalysis; it reads MVIMGNELQLENKILKG. The Nucleophile role is filled by T18.

The protein belongs to the peptidase T1B family. As to quaternary structure, the 20S proteasome core is composed of 14 alpha and 14 beta subunits that assemble into four stacked heptameric rings, resulting in a barrel-shaped structure. The two inner rings, each composed of seven catalytic beta subunits, are sandwiched by two outer rings, each composed of seven alpha subunits. The catalytic chamber with the active sites is on the inside of the barrel. Has a gated structure, the ends of the cylinder being occluded by the N-termini of the alpha-subunits. Is capped at one or both ends by the proteasome regulatory ATPase, PAN.

Its subcellular location is the cytoplasm. It catalyses the reaction Cleavage of peptide bonds with very broad specificity.. With respect to regulation, the formation of the proteasomal ATPase PAN-20S proteasome complex, via the docking of the C-termini of PAN into the intersubunit pockets in the alpha-rings, triggers opening of the gate for substrate entry. Interconversion between the open-gate and close-gate conformations leads to a dynamic regulation of the 20S proteasome proteolysis activity. Component of the proteasome core, a large protease complex with broad specificity involved in protein degradation. The chain is Proteasome subunit beta 2 from Saccharolobus solfataricus (strain 98/2) (Sulfolobus solfataricus).